Consider the following 441-residue polypeptide: Methylenetetrahydrofolate--tRNA-(uracil-5-)-methyltransferase TrmFO (441 aa).

10-15 serves as a coordination point for FAD; that stretch reads GAGLAG.

The protein belongs to the MnmG family. TrmFO subfamily. It depends on FAD as a cofactor.

Its subcellular location is the cytoplasm. It carries out the reaction uridine(54) in tRNA + (6R)-5,10-methylene-5,6,7,8-tetrahydrofolate + NADH + H(+) = 5-methyluridine(54) in tRNA + (6S)-5,6,7,8-tetrahydrofolate + NAD(+). It catalyses the reaction uridine(54) in tRNA + (6R)-5,10-methylene-5,6,7,8-tetrahydrofolate + NADPH + H(+) = 5-methyluridine(54) in tRNA + (6S)-5,6,7,8-tetrahydrofolate + NADP(+). In terms of biological role, catalyzes the folate-dependent formation of 5-methyl-uridine at position 54 (M-5-U54) in all tRNAs. This Desulforamulus reducens (strain ATCC BAA-1160 / DSM 100696 / MI-1) (Desulfotomaculum reducens) protein is Methylenetetrahydrofolate--tRNA-(uracil-5-)-methyltransferase TrmFO.